Reading from the N-terminus, the 351-residue chain is Keratocan (351 aa).

A signal peptide spans 1–20 (MATPNCLILWVLLIADTVWT). The region spanning 34–72 (DWDVHDDFYCPRECFCPPSFPTALYCENRGLTEIPPIPS) is the LRRNT domain. Disulfide bonds link Cys43–Cys49 and Cys47–Cys59. LRR repeat units lie at residues 73–94 (RIWY…PFEN), 97–118 (QLRW…KGAL), 123–143 (KLLF…PLPR), 144–165 (SLEQ…TFSN), 168–181 (NLTL…KLLD), 194–214 (NLMQ…RLPA), 215–236 (NTMQ…YFNV), 239–259 (KVAF…PSRG), 264–283 (SILD…RINA), and 284–305 (NLQH…VICP). N-linked (GlcNAc...) (keratan sulfate) asparagine glycosylation occurs at Asn94. An N-linked (GlcNAc...) (keratan sulfate) asparagine glycan is attached at Asn168. An N-linked (GlcNAc...) asparagine glycan is attached at Asn223. Asn299 is a glycosylation site (N-linked (GlcNAc...) asparagine). Residues Cys304 and Cys342 are joined by a disulfide bond.

Belongs to the small leucine-rich proteoglycan (SLRP) family. SLRP class II subfamily. Post-translationally, binds keratan sulfate chains. As to expression, selectively expressed in cornea of adult where it is detected in keratocytes but not in scleral cells. In embryo, first detected in periocular mesenchymal cells migrating toward developing cornea on 13.5 dpc; expression gradually restricted to corneal stromal cells on 14.5 to 18.5 dpc. Detected in scleral cells of 15.5 dpc but not in 18.5 dpc embryos.

The protein resides in the secreted. It localises to the extracellular space. Its subcellular location is the extracellular matrix. Functionally, may be important in developing and maintaining corneal transparency and for the structure of the stromal matrix. The polypeptide is Keratocan (Kera) (Mus musculus (Mouse)).